Reading from the N-terminus, the 213-residue chain is Large ribosomal subunit protein uL3 (213 aa).

Residues 124–151 (KRHGQSRGPMAHGSRYHRRPGSMGSIAP) are disordered.

Belongs to the universal ribosomal protein uL3 family. As to quaternary structure, part of the 50S ribosomal subunit. Forms a cluster with proteins L14 and L19.

In terms of biological role, one of the primary rRNA binding proteins, it binds directly near the 3'-end of the 23S rRNA, where it nucleates assembly of the 50S subunit. This chain is Large ribosomal subunit protein uL3, found in Geobacillus kaustophilus (strain HTA426).